Reading from the N-terminus, the 215-residue chain is 3-isopropylmalate dehydratase small subunit (215 aa).

The protein belongs to the LeuD family. LeuD type 1 subfamily. As to quaternary structure, heterodimer of LeuC and LeuD.

It catalyses the reaction (2R,3S)-3-isopropylmalate = (2S)-2-isopropylmalate. It functions in the pathway amino-acid biosynthesis; L-leucine biosynthesis; L-leucine from 3-methyl-2-oxobutanoate: step 2/4. Its function is as follows. Catalyzes the isomerization between 2-isopropylmalate and 3-isopropylmalate, via the formation of 2-isopropylmaleate. In Xylella fastidiosa (strain M12), this protein is 3-isopropylmalate dehydratase small subunit.